A 103-amino-acid polypeptide reads, in one-letter code: MGKTVKIRKDDMVLVIAGKDRGKRGAVLRVLRDVDRVLVQGLNMRKKTIRRKSAQDEGGIMEVEAPIHISNVMIMGKKGPTRVGYRMENGKKVRVCRKTGEVL.

The protein belongs to the universal ribosomal protein uL24 family. As to quaternary structure, part of the 50S ribosomal subunit.

In terms of biological role, one of two assembly initiator proteins, it binds directly to the 5'-end of the 23S rRNA, where it nucleates assembly of the 50S subunit. One of the proteins that surrounds the polypeptide exit tunnel on the outside of the subunit. In Treponema pallidum (strain Nichols), this protein is Large ribosomal subunit protein uL24.